The primary structure comprises 290 residues: tRNA (adenine(58)-N(1))-methyltransferase catalytic subunit TRMT61A (290 aa).

At S2 the chain carries N-acetylserine. Substrate stretches follow at residues 20-22 (LGH), 35-42 (QTQTRHGV), 64-65 (GW), 85-89 (QILYS), and 110-117 (SGTGSGSV). S-adenosyl-L-methionine contacts are provided by residues L87, 114–116 (SGS), E135, R140, 163–164 (DV), and D181. 2 substrate regions span residues 180 to 183 (LDIP) and 205 to 212 (SFSPCIEQ). Residue S264 is modified to Phosphoserine. Position 279 (T279) interacts with substrate.

It belongs to the class I-like SAM-binding methyltransferase superfamily. TRM61 family. As to quaternary structure, heterotetramer; composed of two copies of TRMT6 and two copies of TRMT61A.

The protein localises to the nucleus. The catalysed reaction is adenosine(58) in tRNA + S-adenosyl-L-methionine = N(1)-methyladenosine(58) in tRNA + S-adenosyl-L-homocysteine + H(+). The enzyme catalyses an adenosine in mRNA + S-adenosyl-L-methionine = an N(1)-methyladenosine in mRNA + S-adenosyl-L-homocysteine + H(+). Catalytic subunit of tRNA (adenine-N(1)-)-methyltransferase, which catalyzes the formation of N(1)-methyladenine at position 58 (m1A58) in initiator methionyl-tRNA. Catalytic subunit of mRNA N(1)-methyltransferase complex, which mediates methylation of adenosine residues at the N(1) position of a small subset of mRNAs: N(1) methylation takes place in tRNA T-loop-like structures of mRNAs and is only present at low stoichiometries. The chain is tRNA (adenine(58)-N(1))-methyltransferase catalytic subunit TRMT61A (Trmt61a) from Mus musculus (Mouse).